The sequence spans 177 residues: Transcription termination/antitermination protein NusG (177 aa).

Residues 128–156 (ETVKVIDGPFANFTGSIEEIDYDKSKVKV) form the KOW domain.

Belongs to the NusG family.

Functionally, participates in transcription elongation, termination and antitermination. Stimulates RNA polymerase pausing at U107 and U144 in the trp leader. NusG-stimulated pausing is sequence specific. Does not affect trp leader termination. The sequence is that of Transcription termination/antitermination protein NusG from Bacillus subtilis (strain 168).